Reading from the N-terminus, the 37-residue chain is MKVRASVKKMCEKCRVIRRRGRVMVICSNPKHKQRQG.

It belongs to the bacterial ribosomal protein bL36 family.

This Rippkaea orientalis (strain PCC 8801 / RF-1) (Cyanothece sp. (strain PCC 8801)) protein is Large ribosomal subunit protein bL36.